The primary structure comprises 256 residues: Phosphonates import ATP-binding protein PhnC (256 aa).

The 245-residue stretch at 3 to 247 (LELKNISKTY…VLHKEIFTNV (245 aa)) folds into the ABC transporter domain. Position 36 to 43 (36 to 43 (GLSGAGKS)) interacts with ATP.

This sequence belongs to the ABC transporter superfamily. Phosphonates importer (TC 3.A.1.9.1) family. The complex is composed of two ATP-binding proteins (PhnC), two transmembrane proteins (PhnE) and a solute-binding protein (PhnD).

The protein localises to the cell inner membrane. The catalysed reaction is phosphonate(out) + ATP + H2O = phosphonate(in) + ADP + phosphate + H(+). Functionally, part of the ABC transporter complex PhnCDE involved in phosphonates import. Responsible for energy coupling to the transport system. In Treponema denticola (strain ATCC 35405 / DSM 14222 / CIP 103919 / JCM 8153 / KCTC 15104), this protein is Phosphonates import ATP-binding protein PhnC.